A 326-amino-acid polypeptide reads, in one-letter code: Olfactory receptor 11H2 (326 aa).

The Extracellular segment spans residues 1-44 (MCPLTLHVTGLMNVSEPNSSFAFVNEFILQGFSCEWTIQIFLFS). N-linked (GlcNAc...) asparagine glycosylation is found at N13 and N18. The chain crosses the membrane as a helical span at residues 45 to 65 (LFTTIYALTITGNGAIAFVLW). The Cytoplasmic segment spans residues 66–72 (CDRRLHT). A helical transmembrane segment spans residues 73-93 (PMYMFLGNFSFLEIWYVSSTV). Residues 94–112 (PKMLVNFLSEKKNISFAGC) lie on the Extracellular side of the membrane. N-linked (GlcNAc...) asparagine glycosylation occurs at N106. Cysteines 112 and 194 form a disulfide. The helical transmembrane segment at 113–133 (FLQFYFFFSLGTSECLLLTVM) threads the bilayer. The Cytoplasmic portion of the chain corresponds to 134–158 (AFDQYLAICRPLLYPNIMTGHLYAK). A helical membrane pass occupies residues 159–179 (LVILCWVCGFLWFLIPIVLIS). At 180 to 216 (QKPFCGPNIIDHVVCDPGPLFALDCVSAPRIQLFCYT) the chain is on the extracellular side. The helical transmembrane segment at 217-237 (LSSLVIFGNFLFIIGSYTLVL) threads the bilayer. Residues 238 to 259 (KAVLGMPSSTGRHKAFSTCGSH) lie on the Cytoplasmic side of the membrane. A helical transmembrane segment spans residues 260 to 280 (LAVVSLCYSPLMVMYVSPGLG). At 281–287 (HSTGMQK) the chain is on the extracellular side. A helical membrane pass occupies residues 288–308 (IETLFYAMVTPLFNPLIYSLQ). At 309 to 326 (NKEIKAALRKVLGSSNII) the chain is on the cytoplasmic side.

This sequence belongs to the G-protein coupled receptor 1 family.

It localises to the cell membrane. Its function is as follows. Odorant receptor. This Homo sapiens (Human) protein is Olfactory receptor 11H2 (OR11H2).